We begin with the raw amino-acid sequence, 326 residues long: Methionyl-tRNA formyltransferase (326 aa).

110-113 contributes to the (6S)-5,6,7,8-tetrahydrofolate binding site; that stretch reads SLLP. The disordered stretch occupies residues 307–326; it reads VGTRFSPPEAPQREPAPGEA.

It belongs to the Fmt family.

The enzyme catalyses L-methionyl-tRNA(fMet) + (6R)-10-formyltetrahydrofolate = N-formyl-L-methionyl-tRNA(fMet) + (6S)-5,6,7,8-tetrahydrofolate + H(+). Its function is as follows. Attaches a formyl group to the free amino group of methionyl-tRNA(fMet). The formyl group appears to play a dual role in the initiator identity of N-formylmethionyl-tRNA by promoting its recognition by IF2 and preventing the misappropriation of this tRNA by the elongation apparatus. This chain is Methionyl-tRNA formyltransferase, found in Symbiobacterium thermophilum (strain DSM 24528 / JCM 14929 / IAM 14863 / T).